A 256-amino-acid polypeptide reads, in one-letter code: MLLMAVDIGNTNVVIGFIDDGRIAGTYRITTKANHTSDEYGLMITQFLALSGYKPADVDDVIISSVVPKVMHSFRASIVKFLDIDPMIVGPGIKTGLNIRMDNPQNMGADCIADCAGAYYEYGGPILVADFGTATTFNYVTADASVISGLITTGIRTAAAALWEGTAQLPEVEITRPKSILAKSTKPAMQAGLYYNFLGGIERTIAQFHKEIDEDFRVVATGGLSRVFADGTNMIDIYDPDLIFKGMWHIYDRNVR.

7 to 14 contacts ATP; it reads DIGNTNVV. Residue 108–111 coordinates substrate; it reads GADC. The active-site Proton acceptor is Asp-110. Asp-130 serves as a coordination point for K(+). ATP is bound at residue Thr-133. Thr-185 lines the substrate pocket.

Belongs to the type III pantothenate kinase family. In terms of assembly, homodimer. Requires NH4(+) as cofactor. The cofactor is K(+).

It localises to the cytoplasm. The enzyme catalyses (R)-pantothenate + ATP = (R)-4'-phosphopantothenate + ADP + H(+). The protein operates within cofactor biosynthesis; coenzyme A biosynthesis; CoA from (R)-pantothenate: step 1/5. Its function is as follows. Catalyzes the phosphorylation of pantothenate (Pan), the first step in CoA biosynthesis. The polypeptide is Type III pantothenate kinase (Bifidobacterium adolescentis (strain ATCC 15703 / DSM 20083 / NCTC 11814 / E194a)).